Here is a 620-residue protein sequence, read N- to C-terminus: 1-deoxy-D-xylulose-5-phosphate synthase (620 aa).

Residues His80 and 121–123 contribute to the thiamine diphosphate site; that span reads GHS. A Mg(2+)-binding site is contributed by Asp152. Thiamine diphosphate-binding positions include 153-154, Asn181, Tyr288, and Glu370; that span reads GA. Asn181 contributes to the Mg(2+) binding site.

This sequence belongs to the transketolase family. DXPS subfamily. Homodimer. The cofactor is Mg(2+). Thiamine diphosphate serves as cofactor.

The enzyme catalyses D-glyceraldehyde 3-phosphate + pyruvate + H(+) = 1-deoxy-D-xylulose 5-phosphate + CO2. It participates in metabolic intermediate biosynthesis; 1-deoxy-D-xylulose 5-phosphate biosynthesis; 1-deoxy-D-xylulose 5-phosphate from D-glyceraldehyde 3-phosphate and pyruvate: step 1/1. Catalyzes the acyloin condensation reaction between C atoms 2 and 3 of pyruvate and glyceraldehyde 3-phosphate to yield 1-deoxy-D-xylulose-5-phosphate (DXP). The sequence is that of 1-deoxy-D-xylulose-5-phosphate synthase from Salmonella heidelberg (strain SL476).